A 598-amino-acid chain; its full sequence is Elongation factor 4 (598 aa).

The tr-type G domain occupies 2-184 (QHIRNFSIIA…AIVARVPAPK (183 aa)). GTP-binding positions include 14–19 (DHGKST) and 131–134 (NKID).

Belongs to the TRAFAC class translation factor GTPase superfamily. Classic translation factor GTPase family. LepA subfamily.

The protein localises to the cell inner membrane. It catalyses the reaction GTP + H2O = GDP + phosphate + H(+). In terms of biological role, required for accurate and efficient protein synthesis under certain stress conditions. May act as a fidelity factor of the translation reaction, by catalyzing a one-codon backward translocation of tRNAs on improperly translocated ribosomes. Back-translocation proceeds from a post-translocation (POST) complex to a pre-translocation (PRE) complex, thus giving elongation factor G a second chance to translocate the tRNAs correctly. Binds to ribosomes in a GTP-dependent manner. This Azoarcus sp. (strain BH72) protein is Elongation factor 4.